A 427-amino-acid chain; its full sequence is Serine--tRNA ligase (427 aa).

229–231 (TAE) provides a ligand contact to L-serine. 260-262 (RSE) contacts ATP. Glu-283 provides a ligand contact to L-serine. 347 to 350 (EISS) provides a ligand contact to ATP. Residue Ser-383 coordinates L-serine.

It belongs to the class-II aminoacyl-tRNA synthetase family. Type-1 seryl-tRNA synthetase subfamily. In terms of assembly, homodimer. The tRNA molecule binds across the dimer.

It localises to the cytoplasm. It carries out the reaction tRNA(Ser) + L-serine + ATP = L-seryl-tRNA(Ser) + AMP + diphosphate + H(+). It catalyses the reaction tRNA(Sec) + L-serine + ATP = L-seryl-tRNA(Sec) + AMP + diphosphate + H(+). It functions in the pathway aminoacyl-tRNA biosynthesis; selenocysteinyl-tRNA(Sec) biosynthesis; L-seryl-tRNA(Sec) from L-serine and tRNA(Sec): step 1/1. In terms of biological role, catalyzes the attachment of serine to tRNA(Ser). Is also able to aminoacylate tRNA(Sec) with serine, to form the misacylated tRNA L-seryl-tRNA(Sec), which will be further converted into selenocysteinyl-tRNA(Sec). In Oleidesulfovibrio alaskensis (strain ATCC BAA-1058 / DSM 17464 / G20) (Desulfovibrio alaskensis), this protein is Serine--tRNA ligase.